A 345-amino-acid chain; its full sequence is Ribonucleoside-diphosphate reductase subunit beta (345 aa).

The Fe cation site is built by D88, E118, and H121. The active site involves Y125. The Fe cation site is built by E185, E219, and H222.

Belongs to the ribonucleoside diphosphate reductase small chain family. As to quaternary structure, tetramer of two alpha and two beta subunits. Fe cation serves as cofactor.

The enzyme catalyses a 2'-deoxyribonucleoside 5'-diphosphate + [thioredoxin]-disulfide + H2O = a ribonucleoside 5'-diphosphate + [thioredoxin]-dithiol. Functionally, provides the precursors necessary for DNA synthesis. Catalyzes the biosynthesis of deoxyribonucleotides from the corresponding ribonucleotides. This chain is Ribonucleoside-diphosphate reductase subunit beta (nrdB), found in Halalkalibacterium halodurans (strain ATCC BAA-125 / DSM 18197 / FERM 7344 / JCM 9153 / C-125) (Bacillus halodurans).